Here is a 182-residue protein sequence, read N- to C-terminus: Oligoribonuclease (182 aa).

The 164-residue stretch at 8–171 (LIWIDLEMTG…DDIRESIKEL (164 aa)) folds into the Exonuclease domain. The active site involves Tyr-129.

The protein belongs to the oligoribonuclease family.

The protein resides in the cytoplasm. In terms of biological role, 3'-to-5' exoribonuclease specific for small oligoribonucleotides. The chain is Oligoribonuclease from Haemophilus influenzae (strain PittGG).